Here is a 542-residue protein sequence, read N- to C-terminus: Multidrug transporter DTR1 (542 aa).

N-linked (GlcNAc...) asparagine glycosylation is found at Asn-6 and Asn-46. The helical transmembrane segment at Leu-80–Ile-100 threads the bilayer. Residues Asn-111 and Asn-118 are each glycosylated (N-linked (GlcNAc...) asparagine). 5 consecutive transmembrane segments (helical) span residues Ala-119–Ala-139, Ile-146–Pro-166, Ile-169–Leu-189, Phe-210–Leu-230, and Trp-237–Leu-257. Asn-274 carries N-linked (GlcNAc...) asparagine glycosylation. Helical transmembrane passes span Ile-332–Tyr-352, Ile-374–His-394, Ile-419–Ile-439, and Phe-441–Trp-461. Asn-463 carries an N-linked (GlcNAc...) asparagine glycan. The next 2 helical transmembrane spans lie at Ala-481–Ala-501 and Phe-511–Ile-531.

The protein belongs to the major facilitator superfamily. CAR1 family.

The protein localises to the cell membrane. Plasma membrane acetic acid exporter, relieving the stress induced upon cells within hemocytes, and thus enabling increased proliferation and virulence against Galleria mellonella larvae. Confers resistance to weak acid and oxidative stress, but not to antifungal drugs. The sequence is that of Multidrug transporter DTR1 from Candida glabrata (strain ATCC 2001 / BCRC 20586 / JCM 3761 / NBRC 0622 / NRRL Y-65 / CBS 138) (Yeast).